A 458-amino-acid chain; its full sequence is F-box/FBD/LRR-repeat protein At1g78750 (458 aa).

The F-box domain maps to 17 to 67; sequence VDWISNLPETLLCQVLFYLPTKDVVKSSVLSSRWRNLWKYVPGFNLSYCDF. 5 LRR repeats span residues 152–183, 184–209, 231–258, 302–327, and 345–370; these read CETL…HLSI, VKFA…NINR, VADT…RLSD, DFLV…YDYS, and FYGY…VVGS. The FBD domain maps to 376-428; that stretch reads KEGINILSVPRGFLSSLEYVKIERPLKGEAMEMKLVSYLLENSTILKKLTLCL.

This chain is F-box/FBD/LRR-repeat protein At1g78750, found in Arabidopsis thaliana (Mouse-ear cress).